A 501-amino-acid polypeptide reads, in one-letter code: Neuronal acetylcholine receptor subunit beta-2 (501 aa).

Residues 1 to 25 (MARCSNSMALLFSFGLLWLCSGVLG) form the signal peptide. Topologically, residues 26–238 (TDTEERLVEH…IIRRKPLFYT (213 aa)) are extracellular. N-linked (GlcNAc...) asparagine glycosylation is found at asparagine 51 and asparagine 168. A disulfide bridge links cysteine 155 with cysteine 169. A helical transmembrane segment spans residues 239–259 (INLIIPCVLITSLAILVFYLP). Residues 260–267 (SDCGEKMT) lie on the Cytoplasmic side of the membrane. The chain crosses the membrane as a helical span at residues 268-288 (LCISVLLALTVFLLLISKIVP). Over 289-300 (PTSLDVPLVGKY) the chain is Extracellular. A helical transmembrane segment spans residues 301 to 321 (LMFTMVLVTFSIVTSVCVLNV). Residues 322-459 (HHRSPTTHTM…WKYVAMVIDR (138 aa)) are Cytoplasmic-facing. The helical transmembrane segment at 460-480 (LFLWIFVFVCVFGTIGMFLQP) threads the bilayer.

Belongs to the ligand-gated ion channel (TC 1.A.9) family. Acetylcholine receptor (TC 1.A.9.1) subfamily. Beta-2/CHRNB2 sub-subfamily. In terms of assembly, neuronal AChR is a heteropentamer composed of two different types of subunits: alpha and beta. CHRNB2/Beta-2 subunit can be combined to CHRNA2/alpha-2, CHRNA3/alpha-3 or CHRNA4/alpha-4, CHRNA5/alpha-5, CHRNA6/alpha-6 and CHRNB3/beta-3 to give rise to functional receptors. CHRNA2:CHRNB2 and CHRNA4:CHRNB2 nAChR complexes exist in two subtypes: LS (low agonist sensitivity) with a (CHRNA2/4)3:(CHRNB2)2 and HS (high agonist sensitivity) with a (CHRNA2/4)2:(CHRNB2)3 stoichiometry; the subtypes differ in their subunit binding interfaces which are involved in ligand binding. Cells produce predominantly an (CHRNA4)3:(CHRNB2)2 nAChR. The stoichiometric form (CHRNA4)2:(CHRNB2)3 expression is selectively up-regulated by nicotine and has lower single channel conductance and calcium permeability. Also part of the stoichiometric forms: (CHRNA4:CHRNB2)2:CHRNB3 or (CHRNA6:CHRNB2)2:CHRNB3. Can form heteropentamers with CHRNA7, mainly found in basal forebrain cholinergic neurons. Interacts with RIC3; which is required for proper folding and assembly. Interacts with LYPD6.

The protein resides in the synaptic cell membrane. The protein localises to the cell membrane. It catalyses the reaction K(+)(in) = K(+)(out). The enzyme catalyses Na(+)(in) = Na(+)(out). The catalysed reaction is Ca(2+)(in) = Ca(2+)(out). Activated by a myriad of ligands such as acetylcholine, cytisine, nicotine, choline and epibatidine. Channel potentiation by calcium is stoichiometry-selective, CHRNA4:CHRNB2 nACh receptor is achieved by calcium association with topographically distinct sites framed by anionic residues within the CHRNA4 subunit and between the CHRNA4 and CHRNB2 subunits. Oligomeric amyloid-beta protein 42 activates specifially CHRNA7:CHRNB2 nAchRs. nAChR activity is inhibited by the antagonist alpha-conotoxins BuIA, PnIA, PnIC, GID and MII, small disulfide-constrained peptides from cone snails. Its function is as follows. Component of neuronal acetylcholine receptors (nAChRs) that function as pentameric, ligand-gated cation channels with high calcium permeability among other activities. nAChRs are excitatory neurotrasnmitter receptors formed by a collection of nAChR subunits known to mediate synaptic transmission in the nervous system and the neuromuscular junction. Each nAchR subunit confers differential attributes to channel properties, including activation, deactivation and desensitization kinetics, pH sensitivity, cation permeability, and binding to allosteric modulators. CHRNB2 forms heteropentameric neuronal acetylcholine receptors with CHRNA2, CHRNA3, CHRNA4 and CHRNA6, as well as CHRNA5 and CHRNB3 as accesory subunits. Found in two major stoichiometric forms,(CHRNA4)3:(CHRNB2)2 and (CHRNA4)2:(CHRNB2)3, the two stoichiometric forms differ in their unitary conductance, calcium permeability, ACh sensitivity and potentiation by divalent cation. Heteropentameric channels with CHRNA6 and CHRNA4 exhibit high sensitivity to ACh and nicotine and are predominantly expressed in only a few brain areas, including dopaminergic neurons, norepirephrine neurons and cells of the visual system. nAChrs containing CHRNA6 subunits mediate endogenous cholinergic modulation of dopamine and gamma-aminobutyric acid (GABA) release in response to nicotine at nerve terminals. Also forms functional nAChRs with other subunits such as CHRNA7:CHRNB2, mainly expressed in basal forebrain cholinergic neurons. This is Neuronal acetylcholine receptor subunit beta-2 (Chrnb2) from Mus musculus (Mouse).